Here is a 565-residue protein sequence, read N- to C-terminus: Heme/hemopexin transporter protein HuxB (565 aa).

The first 26 residues, methionine 1–alanine 26, serve as a signal peptide directing secretion. The POTRA domain occupies phenylalanine 73 to glycine 150.

It belongs to the TPS (TC 1.B.20) family.

It is found in the cell outer membrane. Its function is as follows. Likely functions in the release of soluble HxuA from the cell. In terms of biological role, probable member of a two partner secretion pathway (TPS) in which it mediates the secretion of HuxA. The sequence is that of Heme/hemopexin transporter protein HuxB (hxuB) from Haemophilus influenzae (strain ATCC 51907 / DSM 11121 / KW20 / Rd).